Here is a 254-residue protein sequence, read N- to C-terminus: Probable phosphatase Sbal_1472 (254 aa).

Positions 8, 10, 16, 41, 74, 102, 132, 193, and 195 each coordinate Zn(2+).

The protein belongs to the PHP family. Zn(2+) serves as cofactor.

This chain is Probable phosphatase Sbal_1472, found in Shewanella baltica (strain OS155 / ATCC BAA-1091).